We begin with the raw amino-acid sequence, 360 residues long: Nicotinate-nucleotide--dimethylbenzimidazole phosphoribosyltransferase (360 aa).

Glutamate 327 acts as the Proton acceptor in catalysis.

The protein belongs to the CobT family.

It carries out the reaction 5,6-dimethylbenzimidazole + nicotinate beta-D-ribonucleotide = alpha-ribazole 5'-phosphate + nicotinate + H(+). The protein operates within nucleoside biosynthesis; alpha-ribazole biosynthesis; alpha-ribazole from 5,6-dimethylbenzimidazole: step 1/2. Functionally, catalyzes the synthesis of alpha-ribazole-5'-phosphate from nicotinate mononucleotide (NAMN) and 5,6-dimethylbenzimidazole (DMB). The polypeptide is Nicotinate-nucleotide--dimethylbenzimidazole phosphoribosyltransferase (Shewanella baltica (strain OS223)).